The following is a 232-amino-acid chain: Two-component response regulator ORR4 (232 aa).

The region spanning 11 to 147 is the Response regulatory domain; sequence HVLAVDDSLI…DMKKLKSHLL (137 aa). D80 bears the 4-aspartylphosphate mark. Disordered regions lie at residues 153 to 174 and 202 to 232; these read LPMA…AASA and AAAM…AVET. Polar residues predominate over residues 209 to 232; the sequence is VISSPDQRTKPRLSSTSSGLAVET.

This sequence belongs to the ARR family. Type-A subfamily. Two-component system major event consists of a His-to-Asp phosphorelay between a sensor histidine kinase (HK) and a response regulator (RR). In plants, the His-to-Asp phosphorelay involves an additional intermediate named Histidine-containing phosphotransfer protein (HPt). This multistep phosphorelay consists of a His-Asp-His-Asp sequential transfer of a phosphate group between first a His and an Asp of the HK protein, followed by the transfer to a conserved His of the HPt protein and finally the transfer to an Asp in the receiver domain of the RR protein. As to expression, expressed in mature leaves and flowers, and at low levels in roots and shoots.

Functionally, functions as a response regulator involved in His-to-Asp phosphorelay signal transduction system. Phosphorylation of the Asp residue in the receiver domain activates the ability of the protein to promote the transcription of target genes. Type-A response regulators seem to act as negative regulators of the cytokinin signaling. This chain is Two-component response regulator ORR4, found in Oryza sativa subsp. indica (Rice).